Here is a 349-residue protein sequence, read N- to C-terminus: Sensory histidine kinase/phosphatase NtrB (349 aa).

Residues 5-78 (IQPDAGQILN…SLAAGQGFTD (74 aa)) form the PAS domain. One can recognise a Histidine kinase domain in the interval 136 to 349 (GLAHEIKNPL…EFSVYLPIRK (214 aa)). His139 carries the post-translational modification Phosphohistidine; by autocatalysis. Position 329 (Lys329) interacts with ATP.

In terms of processing, autophosphorylated.

It localises to the cytoplasm. It carries out the reaction ATP + protein L-histidine = ADP + protein N-phospho-L-histidine.. Member of the two-component regulatory system NtrB/NtrC, which controls expression of the nitrogen-regulated (ntr) genes in response to nitrogen limitation. Under conditions of nitrogen limitation, NtrB autophosphorylates and transfers the phosphoryl group to NtrC. In the presence of nitrogen, acts as a phosphatase that dephosphorylates and inactivates NtrC. The sequence is that of Sensory histidine kinase/phosphatase NtrB (glnL) from Salmonella typhi.